We begin with the raw amino-acid sequence, 627 residues long: 1-deoxy-D-xylulose-5-phosphate synthase (627 aa).

Residues histidine 74 and 115–117 (GHA) each bind thiamine diphosphate. Aspartate 146 contributes to the Mg(2+) binding site. Thiamine diphosphate-binding positions include 147-148 (AA), asparagine 175, phenylalanine 284, and glutamate 364. Asparagine 175 contacts Mg(2+).

Belongs to the transketolase family. DXPS subfamily. As to quaternary structure, homodimer. Mg(2+) serves as cofactor. Thiamine diphosphate is required as a cofactor.

The enzyme catalyses D-glyceraldehyde 3-phosphate + pyruvate + H(+) = 1-deoxy-D-xylulose 5-phosphate + CO2. Its pathway is metabolic intermediate biosynthesis; 1-deoxy-D-xylulose 5-phosphate biosynthesis; 1-deoxy-D-xylulose 5-phosphate from D-glyceraldehyde 3-phosphate and pyruvate: step 1/1. Catalyzes the acyloin condensation reaction between C atoms 2 and 3 of pyruvate and glyceraldehyde 3-phosphate to yield 1-deoxy-D-xylulose-5-phosphate (DXP). This Acidobacterium capsulatum (strain ATCC 51196 / DSM 11244 / BCRC 80197 / JCM 7670 / NBRC 15755 / NCIMB 13165 / 161) protein is 1-deoxy-D-xylulose-5-phosphate synthase.